The following is a 289-amino-acid chain: Release factor glutamine methyltransferase (289 aa).

Residues 122-126 (GVGSG), aspartate 145, tryptophan 174, and asparagine 189 each bind S-adenosyl-L-methionine. Position 189-192 (189-192 (NPPY)) interacts with substrate.

The protein belongs to the protein N5-glutamine methyltransferase family. PrmC subfamily.

It carries out the reaction L-glutaminyl-[peptide chain release factor] + S-adenosyl-L-methionine = N(5)-methyl-L-glutaminyl-[peptide chain release factor] + S-adenosyl-L-homocysteine + H(+). Functionally, methylates the class 1 translation termination release factors RF1/PrfA and RF2/PrfB on the glutamine residue of the universally conserved GGQ motif. In Caulobacter vibrioides (strain ATCC 19089 / CIP 103742 / CB 15) (Caulobacter crescentus), this protein is Release factor glutamine methyltransferase.